The chain runs to 74 residues: uncharacterized protein (74 aa).

Residues 52 to 72 (ITFGFTVLGLGIGMIFGDAGL) form a helical membrane-spanning segment.

The protein localises to the membrane. This is an uncharacterized protein from Methanocaldococcus jannaschii (strain ATCC 43067 / DSM 2661 / JAL-1 / JCM 10045 / NBRC 100440) (Methanococcus jannaschii).